A 152-amino-acid chain; its full sequence is Aspartate carbamoyltransferase regulatory chain (152 aa).

Zn(2+)-binding residues include Cys108, Cys113, Cys136, and Cys139.

The protein belongs to the PyrI family. In terms of assembly, contains catalytic and regulatory chains. It depends on Zn(2+) as a cofactor.

Functionally, involved in allosteric regulation of aspartate carbamoyltransferase. This is Aspartate carbamoyltransferase regulatory chain from Thermococcus kodakarensis (strain ATCC BAA-918 / JCM 12380 / KOD1) (Pyrococcus kodakaraensis (strain KOD1)).